Here is a 141-residue protein sequence, read N- to C-terminus: Histone H2B (141 aa).

Residues M1–P10 show a composition bias toward basic and acidic residues. Residues M1–K49 are disordered. Residues K8 and K9 each carry the N6-acetyllysine; alternate modification. Glycyl lysine isopeptide (Lys-Gly) (interchain with G-Cter in SUMO); alternate cross-links involve residues K8 and K9. Positions S11–A22 are enriched in low complexity. Residue K15 is modified to N6-acetyllysine. The residue at position 26 (K26) is an N6-acetyllysine; alternate. A Glycyl lysine isopeptide (Lys-Gly) (interchain with G-Cter in SUMO); alternate cross-link involves residue K26. K27 is covalently cross-linked (Glycyl lysine isopeptide (Lys-Gly) (interchain with G-Cter in SUMO)). Residue K135 forms a Glycyl lysine isopeptide (Lys-Gly) (interchain with G-Cter in ubiquitin) linkage.

It belongs to the histone H2B family. The nucleosome is a histone octamer containing two molecules each of H2A, H2B, H3 and H4 assembled in one H3-H4 heterotetramer and two H2A-H2B heterodimers. The octamer wraps approximately 147 bp of DNA. Monoubiquitinated by the ubc2-bre1 complex to form H2BK123ub1. H2BK123ub1 gives a specific tag for epigenetic transcriptional activation and is also prerequisite for H3K4me and H3K79me formation. H2BK123ub1 also modulates the formation of double-strand breaks during meiosis and is a prerequisite for DNA-damage checkpoint activation. Post-translationally, acetylated by gcn5 to form H2BK11ac and H2BK16ac. H2BK16ac can also be formed by esa1. Acetylation of N-terminal lysines and particularly formation of H2BK11acK16ac has a positive effect on transcription. In terms of processing, sumoylation to form H2BK6su or H2BK7su, and probably also H2BK16su or H2BK17su, occurs preferentially near the telomeres and represses gene transcription.

It is found in the nucleus. The protein resides in the chromosome. Its function is as follows. Core component of nucleosome. Nucleosomes wrap and compact DNA into chromatin, limiting DNA accessibility to the cellular machineries which require DNA as a template. Histones thereby play a central role in transcription regulation, DNA repair, DNA replication and chromosomal stability. DNA accessibility is regulated via a complex set of post-translational modifications of histones, also called histone code, and nucleosome remodeling. This is Histone H2B (htb1) from Aspergillus niger (strain ATCC MYA-4892 / CBS 513.88 / FGSC A1513).